Reading from the N-terminus, the 408-residue chain is Imidazolonepropionase (408 aa).

2 residues coordinate Fe(3+): H73 and H75. Positions 73 and 75 each coordinate Zn(2+). The 4-imidazolone-5-propanoate site is built by R82, Y145, and H178. Y145 lines the N-formimidoyl-L-glutamate pocket. Position 243 (H243) interacts with Fe(3+). Residue H243 participates in Zn(2+) binding. Q246 lines the 4-imidazolone-5-propanoate pocket. D318 lines the Fe(3+) pocket. Zn(2+) is bound at residue D318. Positions 320 and 322 each coordinate N-formimidoyl-L-glutamate. S323 is a binding site for 4-imidazolone-5-propanoate.

The protein belongs to the metallo-dependent hydrolases superfamily. HutI family. Requires Zn(2+) as cofactor. Fe(3+) serves as cofactor.

The protein resides in the cytoplasm. The catalysed reaction is 4-imidazolone-5-propanoate + H2O = N-formimidoyl-L-glutamate. It functions in the pathway amino-acid degradation; L-histidine degradation into L-glutamate; N-formimidoyl-L-glutamate from L-histidine: step 3/3. Catalyzes the hydrolytic cleavage of the carbon-nitrogen bond in imidazolone-5-propanoate to yield N-formimidoyl-L-glutamate. It is the third step in the universal histidine degradation pathway. The sequence is that of Imidazolonepropionase from Shewanella putrefaciens (strain CN-32 / ATCC BAA-453).